We begin with the raw amino-acid sequence, 572 residues long: uncharacterized protein (572 aa).

Residues 543–572 (AYKKSSNTNSTTNSMNPRRSTVSSEDWVLN) form a disordered region. Over residues 547-563 (SSNTNSTTNSMNPRRST) the composition is skewed to low complexity.

This is an uncharacterized protein from Acanthamoeba polyphaga (Amoeba).